The primary structure comprises 158 residues: Cyclic pyranopterin monophosphate synthase (158 aa).

Residues 75–77 and 113–114 contribute to the substrate site; these read LCH and ME. D128 is an active-site residue.

It belongs to the MoaC family. As to quaternary structure, homohexamer; trimer of dimers.

It catalyses the reaction (8S)-3',8-cyclo-7,8-dihydroguanosine 5'-triphosphate = cyclic pyranopterin phosphate + diphosphate. It participates in cofactor biosynthesis; molybdopterin biosynthesis. Functionally, catalyzes the conversion of (8S)-3',8-cyclo-7,8-dihydroguanosine 5'-triphosphate to cyclic pyranopterin monophosphate (cPMP). In Histophilus somni (strain 129Pt) (Haemophilus somnus), this protein is Cyclic pyranopterin monophosphate synthase.